A 215-amino-acid chain; its full sequence is Thymidylate kinase (215 aa).

12–19 (GLEGAGKT) contributes to the ATP binding site.

The protein belongs to the thymidylate kinase family.

The enzyme catalyses dTMP + ATP = dTDP + ADP. Phosphorylation of dTMP to form dTDP in both de novo and salvage pathways of dTTP synthesis. The chain is Thymidylate kinase from Halorhodospira halophila (strain DSM 244 / SL1) (Ectothiorhodospira halophila (strain DSM 244 / SL1)).